Consider the following 2144-residue polypeptide: Polyketide synthase-like protein Preu9 (2144 aa).

Positions 1 to 250 (MYALHLAVNA…GANAHCIIDH (250 aa)) constitute a Ketosynthase family 3 (KS3) domain. The tract at residues 276-325 (QNGHLNEFAANGTTNAPSRDHRNGITDGRADGNTNGHPNANGDVGGNPIN) is disordered. Residues 293–305 (SRDHRNGITDGRA) show a composition bias toward basic and acidic residues. Residues 435–738 (FVFTGQGAQW…KSPVEQILKS (304 aa)) are malonyl-CoA:ACP transacylase (MAT). An N-terminal hotdog fold region spans residues 827–965 (HDLLGSKVVG…GCVKLIIKSS (139 aa)). Residues 827-1137 (HDLLGSKVVG…ERLRCVSYSR (311 aa)) form a dehydratase (DH) domain region. In terms of domain architecture, PKS/mFAS DH spans 827–1141 (HDLLGSKVVG…CVSYSRISSD (315 aa)). The active-site Proton acceptor; for dehydratase activity is His859. Residues 979-1141 (TLRPVDVRAW…CVSYSRISSD (163 aa)) form a C-terminal hotdog fold region. The active-site Proton donor; for dehydratase activity is Asp1050. Residues 1305 to 1494 (TGIYPQLHRI…GLDVVLDDFP (190 aa)) are methyltransferase (MT) domain. Residues 1731 to 2042 (GVPNSLCFAS…LANMIGKLVV (312 aa)) are enoyl reductase (ER) domain.

Its function is as follows. Polyketide synthase-like protein that lacks important domains such as carrier domain and does probably not function as a polyketide synthase. The protein is Polyketide synthase-like protein Preu9 of Preussia isomera (Coprophilous fungus).